The sequence spans 156 residues: Putative F-box protein R637 (156 aa).

One can recognise an F-box domain in the interval 4 to 51 (HISSLLNEDCVRHIMCFLTDKEKGKFCLTCRDLLYLIKDVKFNDPVNK).

This chain is Putative F-box protein R637, found in Acanthamoeba polyphaga mimivirus (APMV).